The chain runs to 357 residues: Chorismate synthase (357 aa).

The NADP(+) site is built by Arg-48 and Arg-54. FMN is bound by residues 125–127, 238–239, Gly-278, 293–297, and Arg-319; these read RSS, NA, and KPTSS.

It belongs to the chorismate synthase family. In terms of assembly, homotetramer. The cofactor is FMNH2.

It catalyses the reaction 5-O-(1-carboxyvinyl)-3-phosphoshikimate = chorismate + phosphate. It participates in metabolic intermediate biosynthesis; chorismate biosynthesis; chorismate from D-erythrose 4-phosphate and phosphoenolpyruvate: step 7/7. Its function is as follows. Catalyzes the anti-1,4-elimination of the C-3 phosphate and the C-6 proR hydrogen from 5-enolpyruvylshikimate-3-phosphate (EPSP) to yield chorismate, which is the branch point compound that serves as the starting substrate for the three terminal pathways of aromatic amino acid biosynthesis. This reaction introduces a second double bond into the aromatic ring system. The chain is Chorismate synthase from Blochmanniella floridana.